We begin with the raw amino-acid sequence, 693 residues long: MKIFREVFELGNKEIILETGGMARQADGSVTVSCGNNVVLVTTVVKKSVADGTDFFPLSVHYLEKTYAAGKIPGGFLRREGRPSEEQILISRLIDRSIRPSFPDGFFNEIQIVATVLSYDGAFSPDILALIGASASLAISGAPYDDVVAGVRVGYTNGKYILNPNKQDLRDSDLDLVVSGTDDAILMVESEANSLPESVMLGGILYAHKHLKTIINSINRLAKVASKPRIEYSIYQINKFLKSQIKSQFFGEIKNAYTIASKQERNLKLNAIRKNVLEYIFSSDVDGNEYTEKEILEAFHDIEKDLVRSNILEGKPRIDGRCTETIRPINVKIGVLPGVHGSALFTRGETQALVVTTLGSDRDAQLVESLDGIEKCRYMLHYNFPPYSVGECGMVGMAPKRREIGHANLAKRATQAVFPNEEAYPYVVRVVSEILESNGSSSMATVCGSSLSMMDAGVPIAEPVAGIAMGLIKDGAKYAVLSDILGDEDHLGDMDFKVAGTRYGVTALQMDIKIKGISREILEQALEQARVGRLHILGIMNEVIKEHKEAVSDVAPQIHVMNINPAKIKDVVGRGGATVKGIVEKTGAQIDTSDSGEVKVFAKDKKSMDMAVAMIEEIVAEVEEGQVYKGKIVKLLDSGVFVNLLGSQDGYLPFSEIEQAGMKTNSLVEGQGLEVLVQNIDRGGRVKLSLVAR.

The Mg(2+) site is built by aspartate 489 and aspartate 495. The region spanning 556–615 (PQIHVMNINPAKIKDVVGRGGATVKGIVEKTGAQIDTSDSGEVKVFAKDKKSMDMAVAMI) is the KH domain. In terms of domain architecture, S1 motif spans 625-693 (GQVYKGKIVK…GRVKLSLVAR (69 aa)).

It belongs to the polyribonucleotide nucleotidyltransferase family. Component of the RNA degradosome, which is a multiprotein complex involved in RNA processing and mRNA degradation. Mg(2+) is required as a cofactor.

Its subcellular location is the cytoplasm. It catalyses the reaction RNA(n+1) + phosphate = RNA(n) + a ribonucleoside 5'-diphosphate. Its function is as follows. Involved in mRNA degradation. Catalyzes the phosphorolysis of single-stranded polyribonucleotides processively in the 3'- to 5'-direction. This is Polyribonucleotide nucleotidyltransferase from Francisella tularensis subsp. novicida (strain U112).